We begin with the raw amino-acid sequence, 370 residues long: Putative agmatine deiminase (370 aa).

Cys361 serves as the catalytic Amidino-cysteine intermediate.

The protein belongs to the agmatine deiminase family.

The enzyme catalyses agmatine + H2O = N-carbamoylputrescine + NH4(+). This chain is Putative agmatine deiminase, found in Shewanella putrefaciens (strain CN-32 / ATCC BAA-453).